A 288-amino-acid chain; its full sequence is MAAKIIDGKTIAQQVRSEVAQKVQARIAAGLRAPGLAVVLVGSNPASQIYVASKRKACEEVGFVSRSYDLPETTSEAELLELIDTLNADNTIDGILVQLPLPAGIDNVKVLERIHPDKDVDGFHPYNVGRLCQRAPRLRPCTPRGIVTLLERYNIDTFGLNAVVIGASNIVGRPMSMELLLAGCTTTVTHRFTKNLRHHVENADLLIVAVGKPGFIPGDWIKEGAIVIDVGINRLENGKVVGDVVFEDAAKRASYITPVPGGVGPMTVATLIENTLQACVEYHDPQGE.

Residues 166–168 (GAS) and isoleucine 232 contribute to the NADP(+) site.

It belongs to the tetrahydrofolate dehydrogenase/cyclohydrolase family. As to quaternary structure, homodimer.

The enzyme catalyses (6R)-5,10-methylene-5,6,7,8-tetrahydrofolate + NADP(+) = (6R)-5,10-methenyltetrahydrofolate + NADPH. It catalyses the reaction (6R)-5,10-methenyltetrahydrofolate + H2O = (6R)-10-formyltetrahydrofolate + H(+). The protein operates within one-carbon metabolism; tetrahydrofolate interconversion. Catalyzes the oxidation of 5,10-methylenetetrahydrofolate to 5,10-methenyltetrahydrofolate and then the hydrolysis of 5,10-methenyltetrahydrofolate to 10-formyltetrahydrofolate. In Escherichia coli (strain SMS-3-5 / SECEC), this protein is Bifunctional protein FolD.